A 339-amino-acid chain; its full sequence is Phosphate acyltransferase (339 aa).

This sequence belongs to the PlsX family. In terms of assembly, homodimer. Probably interacts with PlsY.

Its subcellular location is the cytoplasm. It catalyses the reaction a fatty acyl-[ACP] + phosphate = an acyl phosphate + holo-[ACP]. The protein operates within lipid metabolism; phospholipid metabolism. Catalyzes the reversible formation of acyl-phosphate (acyl-PO(4)) from acyl-[acyl-carrier-protein] (acyl-ACP). This enzyme utilizes acyl-ACP as fatty acyl donor, but not acyl-CoA. This is Phosphate acyltransferase from Ruthia magnifica subsp. Calyptogena magnifica.